The sequence spans 115 residues: Large ribosomal subunit protein bL19 (115 aa).

The protein belongs to the bacterial ribosomal protein bL19 family.

Functionally, this protein is located at the 30S-50S ribosomal subunit interface and may play a role in the structure and function of the aminoacyl-tRNA binding site. The sequence is that of Large ribosomal subunit protein bL19 from Streptococcus gordonii (strain Challis / ATCC 35105 / BCRC 15272 / CH1 / DL1 / V288).